The following is a 151-amino-acid chain: UPF0336 protein Franean1_6066 (151 aa).

The MaoC-like domain occupies 8–127 (VGRSYTSDVP…NEVLVTSYEF (120 aa)).

It belongs to the UPF0336 family.

The chain is UPF0336 protein Franean1_6066 from Parafrankia sp. (strain EAN1pec).